Reading from the N-terminus, the 449-residue chain is Ras-related GTP-binding protein D (449 aa).

The disordered stretch occupies residues 1–55 (MSQVLGKPQPQGEDGGEDQEEDELVGLAGYEDGPESSDAELDSGPEEGESRRNSW). Composition is skewed to acidic residues over residues 14-24 (DGGEDQEEDEL) and 32-47 (DGPE…GPEE). GTP-binding residues include Arg120, Arg121, Ser122, Gly123, Lys124, Ser125, Ser126, and Thr140. Positions 121, 122, 123, 124, 125, 126, 140, 144, and 146 each coordinate GDP. Thr146, Gly169, His228, Lys229, and Asp231 together coordinate GTP. Positions 228, 229, 231, 269, and 270 each coordinate GDP. Position 270 (Ile270) interacts with GTP. Residues 428-449 (KAQSRLPKKTGATPNGTPRVLL) form a disordered region.

The protein belongs to the GTR/RAG GTP-binding protein family. As to quaternary structure, forms a heterodimer with RRAGA in a sequence-independent manner and RRAGB. Heterodimerization stabilizes RRAG proteins. The GDP-bound form of RRAGD (in complex with the GTP-bound form of RRAGA or RRAGB), interacts with RPTOR, thereby promoting recruitment of mTORC1 to the lysosomes. Component of the lysosomal folliculin complex (LFC), composed of FLCN, FNIP1 (or FNIP2), RagA/RRAGA or RagB/RRAGB GDP-bound, RagC/RRAGC or RagD/RRAGD GTP-bound, and Ragulator. Interacts with NOL8. Interacts with SH3BP4; the interaction with this negative regulator is most probably direct, preferentially occurs with the inactive GDP-bound form of RRAGD and is negatively regulated by amino acids. The Rag heterodimer interacts with SLC38A9; the probable amino acid sensor. Interacts with SESN1, SESN2 and SESN3. The GDP-bound form interacts with TFEB. The GDP-bound form interacts with TFE3. Expressed in the distal tubule of the kidney.

It localises to the cytoplasm. The protein localises to the nucleus. Its subcellular location is the lysosome membrane. The catalysed reaction is GTP + H2O = GDP + phosphate + H(+). With respect to regulation, the activation of RagD/RRAGD is mediated by a GTPase activating protein (GAP). In high-amino acid conditions, activated by GTPase activating protein FLCN that stimulates RRAGD GTPase activity to turn it into its active GDP-bound form. In response to amino acid depletion, the GATOR1 complex inactivates RagC/RRAGC by securing the GTP-bound inactive form. Guanine nucleotide-binding protein that plays a crucial role in the cellular response to amino acid availability through regulation of the mTORC1 signaling cascade. Forms heterodimeric Rag complexes with RagA/RRAGA or RagB/RRAGB and cycles between an inactive GTP-bound and an active GDP-bound form: RagD/RRAGD is in its active form when GDP-bound RagD/RRAGD forms a complex with GTP-bound RagA/RRAGA (or RagB/RRAGB) and in an inactive form when GTP-bound RagD/RRAGD heterodimerizes with GDP-bound RagA/RRAGA (or RagB/RRAGB). In its active form, promotes the recruitment of mTORC1 to the lysosomes and its subsequent activation by the GTPase RHEB. This is a crucial step in the activation of the MTOR signaling cascade by amino acids. Also plays a central role in the non-canonical mTORC1 complex, which acts independently of RHEB and specifically mediates phosphorylation of MiT/TFE factors TFEB and TFE3: GDP-bound RagD/RRAGD mediates recruitment of MiT/TFE factors TFEB and TFE3. The protein is Ras-related GTP-binding protein D of Mus musculus (Mouse).